A 393-amino-acid chain; its full sequence is Putative N(4)-(beta-N-acetylglucosaminyl)-L-asparaginase GM21137 (393 aa).

The first 23 residues, 1–23 (MRTHLRASLWVLCLASTAFSILA), serve as a signal peptide directing secretion. Intrachain disulfides connect Cys-97/Cys-102 and Cys-196/Cys-212. Thr-243 acts as the Nucleophile in catalysis. Substrate is bound by residues 271–274 (RVGD) and 294–297 (TGDG). A disulfide bridge links Cys-354 with Cys-381.

It belongs to the Ntn-hydrolase family. As to quaternary structure, heterotetramer of two alpha and two beta chains arranged as a dimer of alpha/beta heterodimers. In terms of processing, cleaved into an alpha and beta chain by autocatalysis; this activates the enzyme. The N-terminal residue of the beta subunit is responsible for the nucleophile hydrolase activity.

The enzyme catalyses N(4)-(beta-N-acetyl-D-glucosaminyl)-L-asparagine + H2O = N-acetyl-beta-D-glucosaminylamine + L-aspartate + H(+). Cleaves the GlcNAc-Asn bond which joins oligosaccharides to the peptide of asparagine-linked glycoproteins. The chain is Putative N(4)-(beta-N-acetylglucosaminyl)-L-asparaginase GM21137 from Drosophila sechellia (Fruit fly).